We begin with the raw amino-acid sequence, 309 residues long: MTVTVKMLVDKLKLKVVYGNEELLAKAITTADISRPGLEMTGYFDYYSPERLQLVGMKEWSYLKTMTANNRYSVFANIFREETPAVVVARGLEIPEEMLQAAKENGVAVLQGRNSTSSLSGDMSWYLNSQLAERTSVHGVLVDIYGMGVLIQGDSGIGKSETALELVKRGHRLVADDRVDVYAKDEGTLWGEPAEILLHLLEIRGVGIIDVMSLYGASAVRDSSQVQLCICLEHFENDEVFDRLGNSNEEIELQGVKIPRIRIPVKTGRNVSVVIEAAAMNYRAKQMGYDATKTFKDRLTDLISKNGED.

Catalysis depends on residues histidine 138 and lysine 159. 153–160 contacts ATP; the sequence is GDSGIGKS. Residue serine 160 participates in Mg(2+) binding. Aspartate 177 functions as the Proton acceptor; for phosphorylation activity. Proton donor; for dephosphorylation activity in the catalytic mechanism. Positions 201–210 are important for the catalytic mechanism of both phosphorylation and dephosphorylation; that stretch reads LEIRGVGIID. Glutamate 202 is a binding site for Mg(2+). Arginine 243 is a catalytic residue. The tract at residues 264–269 is important for the catalytic mechanism of dephosphorylation; the sequence is PVKTGR.

It belongs to the HPrK/P family. As to quaternary structure, homohexamer. It depends on Mg(2+) as a cofactor.

The catalysed reaction is [HPr protein]-L-serine + ATP = [HPr protein]-O-phospho-L-serine + ADP + H(+). It catalyses the reaction [HPr protein]-O-phospho-L-serine + phosphate + H(+) = [HPr protein]-L-serine + diphosphate. Functionally, catalyzes the ATP- as well as the pyrophosphate-dependent phosphorylation of a specific serine residue in HPr, a phosphocarrier protein of the phosphoenolpyruvate-dependent sugar phosphotransferase system (PTS). HprK/P also catalyzes the pyrophosphate-producing, inorganic phosphate-dependent dephosphorylation (phosphorolysis) of seryl-phosphorylated HPr (P-Ser-HPr). The two antagonistic activities of HprK/P are regulated by several intracellular metabolites, which change their concentration in response to the absence or presence of rapidly metabolisable carbon sources (glucose, fructose, etc.) in the growth medium. Therefore, by controlling the phosphorylation state of HPr, HPrK/P is a sensor enzyme that plays a major role in the regulation of carbon metabolism and sugar transport: it mediates carbon catabolite repression (CCR), and regulates PTS-catalyzed carbohydrate uptake and inducer exclusion. This is HPr kinase/phosphorylase from Streptococcus thermophilus (strain ATCC BAA-491 / LMD-9).